The following is an 850-amino-acid chain: Protein translocase subunit SecA 2 (850 aa).

ATP contacts are provided by residues Gln83, 101–105 (GEGKT), and Asp491.

Belongs to the SecA family. In terms of assembly, monomer and homodimer. Part of the essential Sec protein translocation apparatus which comprises SecA, SecYEG and auxiliary proteins SecDF. Other proteins may also be involved.

The protein localises to the cell membrane. It is found in the cytoplasm. The enzyme catalyses ATP + H2O + cellular proteinSide 1 = ADP + phosphate + cellular proteinSide 2.. Its function is as follows. Part of the Sec protein translocase complex. Interacts with the SecYEG preprotein conducting channel. Has a central role in coupling the hydrolysis of ATP to the transfer of proteins into and across the cell membrane, serving as an ATP-driven molecular motor driving the stepwise translocation of polypeptide chains across the membrane. This chain is Protein translocase subunit SecA 2, found in Mycolicibacterium vanbaalenii (strain DSM 7251 / JCM 13017 / BCRC 16820 / KCTC 9966 / NRRL B-24157 / PYR-1) (Mycobacterium vanbaalenii).